A 596-amino-acid chain; its full sequence is uncharacterized protein (596 aa).

The Helicase ATP-binding domain maps to 44-203 (KYLASQPRDF…PFVTYALDAD (160 aa)). Positions 285–432 (RLRQLRTHVP…PHRESTDNPL (148 aa)) constitute a Helicase C-terminal domain. Disordered stretches follow at residues 420-444 (LGKP…QTEQ) and 506-533 (EQLQ…SVHG). Residues 510-523 (KRTAAQQASSTPDR) are compositionally biased toward polar residues.

The protein to M.tuberculosis Rv2917.

This is an uncharacterized protein from Mycobacterium leprae (strain TN).